The sequence spans 691 residues: DNA ligase (691 aa).

NAD(+) contacts are provided by residues 41–45 (DAEYD), 90–91 (SL), and glutamate 130. The active-site N6-AMP-lysine intermediate is the lysine 132. Arginine 153, glutamate 190, lysine 307, and lysine 331 together coordinate NAD(+). Residues cysteine 425, cysteine 428, cysteine 443, and cysteine 449 each coordinate Zn(2+). A BRCT domain is found at 610–691 (APQGVLAGKT…LHQLLEGNTR (82 aa)).

The protein belongs to the NAD-dependent DNA ligase family. LigA subfamily. Mg(2+) serves as cofactor. The cofactor is Mn(2+).

The catalysed reaction is NAD(+) + (deoxyribonucleotide)n-3'-hydroxyl + 5'-phospho-(deoxyribonucleotide)m = (deoxyribonucleotide)n+m + AMP + beta-nicotinamide D-nucleotide.. In terms of biological role, DNA ligase that catalyzes the formation of phosphodiester linkages between 5'-phosphoryl and 3'-hydroxyl groups in double-stranded DNA using NAD as a coenzyme and as the energy source for the reaction. It is essential for DNA replication and repair of damaged DNA. In Burkholderia multivorans (strain ATCC 17616 / 249), this protein is DNA ligase.